The primary structure comprises 521 residues: Bifunctional purine biosynthesis protein PurH (521 aa).

Residues 1-145 enclose the MGS-like domain; the sequence is MIKQALISVS…KNHRDVTVVV (145 aa).

Belongs to the PurH family.

It catalyses the reaction (6R)-10-formyltetrahydrofolate + 5-amino-1-(5-phospho-beta-D-ribosyl)imidazole-4-carboxamide = 5-formamido-1-(5-phospho-D-ribosyl)imidazole-4-carboxamide + (6S)-5,6,7,8-tetrahydrofolate. The catalysed reaction is IMP + H2O = 5-formamido-1-(5-phospho-D-ribosyl)imidazole-4-carboxamide. It participates in purine metabolism; IMP biosynthesis via de novo pathway; 5-formamido-1-(5-phospho-D-ribosyl)imidazole-4-carboxamide from 5-amino-1-(5-phospho-D-ribosyl)imidazole-4-carboxamide (10-formyl THF route): step 1/1. The protein operates within purine metabolism; IMP biosynthesis via de novo pathway; IMP from 5-formamido-1-(5-phospho-D-ribosyl)imidazole-4-carboxamide: step 1/1. The sequence is that of Bifunctional purine biosynthesis protein PurH from Burkholderia ambifaria (strain MC40-6).